We begin with the raw amino-acid sequence, 281 residues long: Pantothenate synthetase (281 aa).

Residue 17 to 24 (MGFLHEGH) coordinates ATP. His24 (proton donor) is an active-site residue. Position 48 (Gln48) interacts with (R)-pantoate. Gln48 contributes to the beta-alanine binding site. An ATP-binding site is contributed by 134 to 137 (GEKD). Gln140 is a binding site for (R)-pantoate. ATP-binding positions include Val163 and 176–179 (LSSR).

Belongs to the pantothenate synthetase family. Homodimer.

Its subcellular location is the cytoplasm. The enzyme catalyses (R)-pantoate + beta-alanine + ATP = (R)-pantothenate + AMP + diphosphate + H(+). It participates in cofactor biosynthesis; (R)-pantothenate biosynthesis; (R)-pantothenate from (R)-pantoate and beta-alanine: step 1/1. In terms of biological role, catalyzes the condensation of pantoate with beta-alanine in an ATP-dependent reaction via a pantoyl-adenylate intermediate. This Deinococcus radiodurans (strain ATCC 13939 / DSM 20539 / JCM 16871 / CCUG 27074 / LMG 4051 / NBRC 15346 / NCIMB 9279 / VKM B-1422 / R1) protein is Pantothenate synthetase.